A 405-amino-acid chain; its full sequence is Type II secretion system protein F (405 aa).

The Cytoplasmic portion of the chain corresponds to 1–169; it reads MPLYRYKALD…SRALKGKVIN (169 aa). The Ca(2+) site is built by Asp-98, Gln-151, and Asp-155. The chain crosses the membrane as a helical span at residues 170 to 190; that stretch reads ALIYPAILLAVVGCALLFLLG. The Periplasmic segment spans residues 191-218; the sequence is YVVPQFAQMYESLDVALPWFTQAVLSVG. Residues 219–239 form a helical membrane-spanning segment; it reads LLVRDWWLVLVVIPGVLGLWL. The Cytoplasmic segment spans residues 240–370; sequence DRKRRNAAFR…LETAQAIDRA (131 aa). Residues 371–391 form a helical membrane-spanning segment; that stretch reads LAALVPLITLVLASVVGLVII. Residues 392–405 lie on the Periplasmic side of the membrane; that stretch reads SVLVPLYDLTNAIG.

Belongs to the GSP F family. As to quaternary structure, type II secretion system is composed of four main components: the outer membrane complex, the inner membrane complex, the cytoplasmic secretion ATPase and the periplasm-spanning pseudopilus. Homodimer. Interacts with XpsE and XpsL components.

The protein resides in the cell inner membrane. Its function is as follows. Component of the type II secretion system inner membrane complex required for the energy-dependent secretion of extracellular factors such as proteases and toxins from the periplasm. The protein is Type II secretion system protein F (xpsF) of Xanthomonas campestris pv. campestris (strain ATCC 33913 / DSM 3586 / NCPPB 528 / LMG 568 / P 25).